Here is a 296-residue protein sequence, read N- to C-terminus: Cobalamin trafficking protein CblD (296 aa).

A mitochondrion-targeting transit peptide spans 1 to 38 (MANVLCNRARLVSYLPGFCSLVKRVVNPKAFSTAGSSG). K203 carries the post-translational modification N6-acetyllysine.

In terms of assembly, heterodimer with MMACHC. Forms a multiprotein complex with MMACHC, MTR and MTRR. In terms of tissue distribution, widely expressed at high levels.

It is found in the cytoplasm. The protein localises to the mitochondrion. Functionally, involved in cobalamin metabolism and trafficking. Plays a role in regulating the biosynthesis and the proportion of two coenzymes, methylcob(III)alamin (MeCbl) and 5'-deoxyadenosylcobalamin (AdoCbl). Promotes oxidation of cob(II)alamin bound to MMACHC. The processing of cobalamin in the cytosol occurs in a multiprotein complex composed of at least MMACHC, MMADHC, MTRR (methionine synthase reductase) and MTR (methionine synthase) which may contribute to shuttle safely and efficiently cobalamin towards MTR in order to produce methionine. This chain is Cobalamin trafficking protein CblD, found in Homo sapiens (Human).